A 331-amino-acid chain; its full sequence is DNA-directed RNA polymerase subunit alpha (331 aa).

The interval 1 to 232 is alpha N-terminal domain (alpha-NTD); the sequence is MQGTFRDFLK…DQLSVFVDLE (232 aa). An alpha C-terminal domain (alpha-CTD) region spans residues 247-331; the sequence is VDPILLRPID…AGLGEDRVVG (85 aa).

The protein belongs to the RNA polymerase alpha chain family. As to quaternary structure, homodimer. The RNAP catalytic core consists of 2 alpha, 1 beta, 1 beta' and 1 omega subunit. When a sigma factor is associated with the core the holoenzyme is formed, which can initiate transcription.

It catalyses the reaction RNA(n) + a ribonucleoside 5'-triphosphate = RNA(n+1) + diphosphate. Functionally, DNA-dependent RNA polymerase catalyzes the transcription of DNA into RNA using the four ribonucleoside triphosphates as substrates. The protein is DNA-directed RNA polymerase subunit alpha of Alkalilimnicola ehrlichii (strain ATCC BAA-1101 / DSM 17681 / MLHE-1).